The sequence spans 311 residues: Methionyl-tRNA formyltransferase (311 aa).

110–113 (SLLP) serves as a coordination point for (6S)-5,6,7,8-tetrahydrofolate.

It belongs to the Fmt family.

The catalysed reaction is L-methionyl-tRNA(fMet) + (6R)-10-formyltetrahydrofolate = N-formyl-L-methionyl-tRNA(fMet) + (6S)-5,6,7,8-tetrahydrofolate + H(+). Functionally, attaches a formyl group to the free amino group of methionyl-tRNA(fMet). The formyl group appears to play a dual role in the initiator identity of N-formylmethionyl-tRNA by promoting its recognition by IF2 and preventing the misappropriation of this tRNA by the elongation apparatus. The chain is Methionyl-tRNA formyltransferase from Streptococcus pneumoniae (strain JJA).